Reading from the N-terminus, the 302-residue chain is Recombination-associated protein RdgC (302 aa).

It belongs to the RdgC family.

It localises to the cytoplasm. The protein localises to the nucleoid. Functionally, may be involved in recombination. This chain is Recombination-associated protein RdgC, found in Haemophilus influenzae (strain PittGG).